The primary structure comprises 174 residues: Gamma-crystallin C (174 aa).

Beta/gamma crystallin 'Greek key' domains follow at residues 2–40 (GKITLYEDKAFQGRSYESTTDCPNLQTYLSRCNSIRVES) and 41–83 (GCWM…CLIP). S-methylcysteine is present on C23. The tract at residues 84-87 (QTGS) is connecting peptide. 2 consecutive Beta/gamma crystallin 'Greek key' domains span residues 88-128 (HRLR…HVLE) and 129-171 (GCWV…RRVV).

It belongs to the beta/gamma-crystallin family. As to quaternary structure, monomer.

Functionally, crystallins are the dominant structural components of the vertebrate eye lens. The protein is Gamma-crystallin C (CRYGC) of Macaca mulatta (Rhesus macaque).